We begin with the raw amino-acid sequence, 308 residues long: Thiohydrolase (308 aa).

It belongs to the polyketide transferase af380 family.

It participates in mycotoxin biosynthesis. Its function is as follows. Thiohydrolase; part of the gene cluster that mediates the biosynthesis of brefeldin A (BFA), a protein transport inhibitor that shows antiviral, antifungal, and antitumor properties. The proposed biosynthesis of BFA involves formation of an acyclic polyketide chain that is differentially tailored throughout the backbone. The highly reducing polyketide synthase Bref-PKS is proposed to synthesize the precisely reduced octaketide precursor, which could then be directly offloaded by the thiohydrolase enzyme Bref-TH followed by a cytochrome P450 monooxygenase-mediated formation of the cyclopentane ring and macrocyclization to afford 7-deoxy BFA. Alternatively, the first ring annulation can also occur on the ACP-tethered intermediate before the thiohydrolase release and lactonization. The C7-hydroxylation by another cytochrome P450 monooxygenase is believed to be the final step in the process to obtain the final structure of BFA. In addition to the HRPKS Bref-PKS and the thiohydrolase Bref-TH, the brefeldin A biosynthesis cluster contains 4 cytochrome p450 monooxygenases (called orf3 to orf6), as well a the probable cluster-specific transcription regulator orf8. The sequence is that of Thiohydrolase from Eupenicillium brefeldianum (Penicillium brefeldianum).